The chain runs to 1140 residues: Protein FAM184A (1140 aa).

Coiled-coil stretches lie at residues 57 to 256, 296 to 800, and 868 to 907; these read ALNT…NKAQ, AILR…IEME, and RITD…LEFK. A disordered region spans residues 1063-1128; it reads PNLSALESGG…EASPVASPDP (66 aa).

Belongs to the FAM184 family.

It is found in the cytoplasm. The protein localises to the P-body. Its subcellular location is the cytoskeleton. It localises to the microtubule organizing center. The protein resides in the centrosome. It is found in the centriolar satellite. This Homo sapiens (Human) protein is Protein FAM184A.